The sequence spans 137 residues: Large ribosomal subunit protein uL16 (137 aa).

Belongs to the universal ribosomal protein uL16 family. In terms of assembly, part of the 50S ribosomal subunit.

In terms of biological role, binds 23S rRNA and is also seen to make contacts with the A and possibly P site tRNAs. The chain is Large ribosomal subunit protein uL16 from Maricaulis maris (strain MCS10) (Caulobacter maris).